The chain runs to 207 residues: Large ribosomal subunit protein uL4 (207 aa).

Residues 48 to 70 (KAQKTRSEVSGGGAKPWRQKGTG) are disordered.

It belongs to the universal ribosomal protein uL4 family. Part of the 50S ribosomal subunit.

Functionally, one of the primary rRNA binding proteins, this protein initially binds near the 5'-end of the 23S rRNA. It is important during the early stages of 50S assembly. It makes multiple contacts with different domains of the 23S rRNA in the assembled 50S subunit and ribosome. Its function is as follows. Forms part of the polypeptide exit tunnel. The chain is Large ribosomal subunit protein uL4 from Francisella tularensis subsp. mediasiatica (strain FSC147).